The chain runs to 324 residues: Carbonic anhydrase 15 (324 aa).

Residues 1–18 form the signal peptide; that stretch reads MWALDFLLSFLLIQLAAQ. One can recognise an Alpha-carbonic anhydrase domain in the interval 23 to 293; that stretch reads GTWCYDSQDP…LGGRRISASP (271 aa). The active-site Proton acceptor is the H90. Zn(2+) contacts are provided by H122, H124, and H147. Y155 is an active-site residue. Residues N184, N194, and N203 are each glycosylated (N-linked (GlcNAc...) asparagine). Position 231 to 232 (231 to 232) interacts with substrate; sequence TT. Residues 269 to 290 form a disordered region; it reads LHPRPLTSNFRPQQPLGGRRIS.

Belongs to the alpha-carbonic anhydrase family. The cofactor is Zn(2+).

It localises to the secreted. It carries out the reaction hydrogencarbonate + H(+) = CO2 + H2O. With respect to regulation, repressed by coumarins. Its function is as follows. Reversible hydration of carbon dioxide. This is Carbonic anhydrase 15 (Ca15) from Mus musculus (Mouse).